Reading from the N-terminus, the 165-residue chain is UPF0179 protein Igni_1272 (165 aa).

The protein belongs to the UPF0179 family.

The sequence is that of UPF0179 protein Igni_1272 from Ignicoccus hospitalis (strain KIN4/I / DSM 18386 / JCM 14125).